We begin with the raw amino-acid sequence, 553 residues long: Efflux pump alnA (553 aa).

Over residues 1–21 (MSSDDTVKQEHSCSADSEKQD) the composition is skewed to basic and acidic residues. Residues 1-36 (MSSDDTVKQEHSCSADSEKQDSSCASDNEQPKEPQS) are disordered. 13 consecutive transmembrane segments (helical) span residues 40–60 (IHGL…FLFA), 85–105 (WSGV…LQIF), 110–130 (IKWM…ICGA), 136–156 (MLIG…VGVM), 174–194 (AMGL…GAFT), 202–222 (WSFY…IFLL), 243–263 (LVGT…INFA), 270–290 (SEPG…VFGI), 319–339 (LLFV…YVIP), 355–375 (VRLL…GYLA), 382–402 (IPWY…MYTI), 413–433 (GYSS…HAVA), and 522–542 (TYIL…GMKW).

It belongs to the major facilitator superfamily. TCR/Tet family.

Its subcellular location is the cell membrane. Efflux pump; part of the gene cluster that mediates the biosynthesis of asperlin, a polyketide showing anti-inflammatory, antitumor and antibiotic activities. Is probably involved in the efflux of asperlin. The protein is Efflux pump alnA of Emericella nidulans (strain FGSC A4 / ATCC 38163 / CBS 112.46 / NRRL 194 / M139) (Aspergillus nidulans).